The sequence spans 413 residues: Eukaryotic initiation factor 4A-10 (413 aa).

Residues aspartate 40–glutamine 68 carry the Q motif motif. The region spanning isoleucine 71 to isoleucine 241 is the Helicase ATP-binding domain. Alanine 84–threonine 91 contacts ATP. The short motif at aspartate 189–aspartate 192 is the DEAD box element. A Helicase C-terminal domain is found at glycine 252–leucine 413.

Belongs to the DEAD box helicase family. eIF4A subfamily. In terms of assembly, eIF4F is a multi-subunit complex, the composition of which varies with external and internal environmental conditions. It is composed of at least EIF4A, EIF4E and EIF4G.

The catalysed reaction is ATP + H2O = ADP + phosphate + H(+). Its function is as follows. ATP-dependent RNA helicase which is a subunit of the eIF4F complex involved in cap recognition and is required for mRNA binding to ribosome. In the current model of translation initiation, eIF4A unwinds RNA secondary structures in the 5'-UTR of mRNAs which is necessary to allow efficient binding of the small ribosomal subunit, and subsequent scanning for the initiator codon. In Nicotiana tabacum (Common tobacco), this protein is Eukaryotic initiation factor 4A-10.